Here is a 504-residue protein sequence, read N- to C-terminus: D-alanine--D-alanyl carrier protein ligase (504 aa).

Residue Thr-152 to Ser-153 participates in ATP binding. Residue Asp-197 coordinates D-alanine. Asn-292 to Thr-297 contributes to the ATP binding site. Val-301 serves as a coordination point for D-alanine. Residues Asp-383, Tyr-394 to Arg-397, and Lys-492 each bind ATP. D-alanine is bound at residue Lys-492.

Belongs to the ATP-dependent AMP-binding enzyme family. DltA subfamily.

It is found in the cytoplasm. The catalysed reaction is holo-[D-alanyl-carrier protein] + D-alanine + ATP = D-alanyl-[D-alanyl-carrier protein] + AMP + diphosphate. It participates in cell wall biogenesis; lipoteichoic acid biosynthesis. Functionally, catalyzes the first step in the D-alanylation of lipoteichoic acid (LTA), the activation of D-alanine and its transfer onto the D-alanyl carrier protein (Dcp) DltC. In an ATP-dependent two-step reaction, forms a high energy D-alanyl-AMP intermediate, followed by transfer of the D-alanyl residue as a thiol ester to the phosphopantheinyl prosthetic group of the Dcp. D-alanylation of LTA plays an important role in modulating the properties of the cell wall in Gram-positive bacteria, influencing the net charge of the cell wall. This chain is D-alanine--D-alanyl carrier protein ligase, found in Bacillus cytotoxicus (strain DSM 22905 / CIP 110041 / 391-98 / NVH 391-98).